Consider the following 295-residue polypeptide: Shikimate dehydrogenase (NADP(+)) (295 aa).

Shikimate is bound by residues 18-20 (SRS) and Thr-66. Residue Lys-70 is the Proton acceptor of the active site. Shikimate is bound by residues Asn-91 and Asp-106. NADP(+) contacts are provided by residues 130 to 134 (GNGGA) and Met-235. Tyr-237 contacts shikimate. Gly-258 lines the NADP(+) pocket.

This sequence belongs to the shikimate dehydrogenase family. In terms of assembly, homodimer.

The catalysed reaction is shikimate + NADP(+) = 3-dehydroshikimate + NADPH + H(+). It functions in the pathway metabolic intermediate biosynthesis; chorismate biosynthesis; chorismate from D-erythrose 4-phosphate and phosphoenolpyruvate: step 4/7. Its function is as follows. Involved in the biosynthesis of the chorismate, which leads to the biosynthesis of aromatic amino acids. Catalyzes the reversible NADPH linked reduction of 3-dehydroshikimate (DHSA) to yield shikimate (SA). This Chlorobium phaeobacteroides (strain DSM 266 / SMG 266 / 2430) protein is Shikimate dehydrogenase (NADP(+)).